Consider the following 445-residue polypeptide: Canavalin (445 aa).

The signal sequence occupies residues 1-26 (MAFSARFPLWLLLGVVLLASVSASFA). Cupin type-1 domains are found at residues 49 to 207 (YLFR…DEIE) and 249 to 407 (FNLR…EEVE).

Belongs to the 7S seed storage protein family. Homotrimer.

In terms of biological role, seed storage protein. The chain is Canavalin from Canavalia gladiata (Sword bean).